Here is a 325-residue protein sequence, read N- to C-terminus: Beta-ketoacyl-[acyl-carrier-protein] synthase III (325 aa).

Catalysis depends on residues Cys-113 and His-250. The segment at 251-255 (QANIR) is ACP-binding. Asn-280 is an active-site residue.

This sequence belongs to the thiolase-like superfamily. FabH family. In terms of assembly, homodimer.

Its subcellular location is the cytoplasm. The catalysed reaction is malonyl-[ACP] + acetyl-CoA + H(+) = 3-oxobutanoyl-[ACP] + CO2 + CoA. Its pathway is lipid metabolism; fatty acid biosynthesis. Its function is as follows. Catalyzes the condensation reaction of fatty acid synthesis by the addition to an acyl acceptor of two carbons from malonyl-ACP. Catalyzes the first condensation reaction which initiates fatty acid synthesis and may therefore play a role in governing the total rate of fatty acid production. Possesses both acetoacetyl-ACP synthase and acetyl transacylase activities. Its substrate specificity determines the biosynthesis of branched-chain and/or straight-chain of fatty acids. The protein is Beta-ketoacyl-[acyl-carrier-protein] synthase III of Streptococcus suis (strain 98HAH33).